The chain runs to 200 residues: Cysteine dioxygenase type 1 (200 aa).

Positions 86, 88, and 140 each coordinate Fe cation. Residues 93–157 constitute a cross-link (3'-(S-cysteinyl)-tyrosine (Cys-Tyr)); sequence CFLKLLQGNL…TEPAVSLHLY (65 aa).

It belongs to the cysteine dioxygenase family. As to quaternary structure, monomer. The cofactor is Fe(2+). Ni(2+) is required as a cofactor. It depends on Zn(2+) as a cofactor. The thioether cross-link between Cys-93 and Tyr-157 plays a structural role through stabilizing the Fe(2+) ion, and prevents the production of highly damaging free hydroxyl radicals by holding the oxygen radical via hydroxyl hydrogen. As to expression, highest expression in liver. Also expressed in kidney, lung, brain and small intestine.

It catalyses the reaction L-cysteine + O2 = 3-sulfino-L-alanine + H(+). It functions in the pathway organosulfur biosynthesis; taurine biosynthesis; hypotaurine from L-cysteine: step 1/2. In terms of biological role, catalyzes the oxidation of cysteine to cysteine sulfinic acid with addition of molecular dioxygen. This is Cysteine dioxygenase type 1 (Cdo1) from Mus musculus (Mouse).